The following is a 784-amino-acid chain: Ribosome biogenesis protein BOP1 homolog (784 aa).

The span at 1 to 11 (MTKKLALKRKG) shows a compositional bias: basic residues. Positions 1 to 159 (MTKKLALKRK…DSDTSDEEDI (159 aa)) are disordered. Acidic residues-rich tracts occupy residues 27-36 (SENEEEEEDL), 45-54 (EDSTDDEGID), 62-73 (SEELQFESDEEG), and 84-111 (AEED…EDEE). The segment covering 112–123 (KDSKLKQSDDKP) has biased composition (basic and acidic residues). The segment covering 124 to 133 (SSSGAASKKA) has biased composition (low complexity). The span at 138–148 (LSKRDTSKPEY) shows a compositional bias: basic and acidic residues. The span at 149 to 158 (QDSDTSDEED) shows a compositional bias: acidic residues. WD repeat units lie at residues 445 to 486 (GHTD…RTIE), 488 to 526 (DEVV…KVLV), 570 to 612 (THFK…SQIP), 615 to 653 (KSKG…LVKK), 656 to 695 (TNSK…KPYQ), 699 to 738 (LHRN…DLLQ), and 754 to 784 (RDEF…RLYT).

It belongs to the WD repeat BOP1/ERB1 family.

It is found in the nucleus. It localises to the nucleolus. The protein localises to the nucleoplasm. Functionally, required for maturation of ribosomal RNAs and formation of the large ribosomal subunit. The protein is Ribosome biogenesis protein BOP1 homolog of Drosophila erecta (Fruit fly).